We begin with the raw amino-acid sequence, 247 residues long: MSCNGCRVLRKGCSENCILRPCIQWIESPEAQGHATVFVAKFFGRAGLMSFISAVPESQCPALFQSLLYEACGRTVNPVNGAVGLLWTGNWNVCQAAVETVLRGGSLKPIPELLNGGGFAGFPSPTSDEASEICTEMLNLRKADDSGDRNIYHHCRFSSSRSRSRSTASPPKRKRLSSEQQPSSELDLSLIPIYPIKTLPFKEDTPSMYSEESVTTVSFQNNNAGDRYVRCGGGGGGATTKLLNLFA.

The LOB domain maps to 1–107 (MSCNGCRVLR…VETVLRGGSL (107 aa)). Positions 157-170 (FSSSRSRSRSTASP) are enriched in low complexity. Positions 157 to 184 (FSSSRSRSRSTASPPKRKRLSSEQQPSS) are disordered.

It belongs to the LOB domain-containing protein family. As to expression, expressed in young shoots, roots, stems, leaves and flowers.

The polypeptide is LOB domain-containing protein 38 (LBD38) (Arabidopsis thaliana (Mouse-ear cress)).